The primary structure comprises 322 residues: DNA repair and recombination protein RadA (322 aa).

105–112 (GMYGSGKT) contributes to the ATP binding site.

This sequence belongs to the eukaryotic RecA-like protein family.

Its function is as follows. Involved in DNA repair and in homologous recombination. Binds and assemble on single-stranded DNA to form a nucleoprotein filament. Hydrolyzes ATP in a ssDNA-dependent manner and promotes DNA strand exchange between homologous DNA molecules. The chain is DNA repair and recombination protein RadA from Methanococcus maripaludis (strain C6 / ATCC BAA-1332).